A 118-amino-acid chain; its full sequence is MAEQVTSAQATAKTVRIAARKIRLVVDLIRGKSVAEAFAILKFTPRSASPVVEKVLKSAVANAENNFDLDREDLVISKVFVNEGPTLKRFRPRAKGSASPINKRTSHITVVVSEKQEG.

This sequence belongs to the universal ribosomal protein uL22 family. Part of the 50S ribosomal subunit.

In terms of biological role, this protein binds specifically to 23S rRNA; its binding is stimulated by other ribosomal proteins, e.g. L4, L17, and L20. It is important during the early stages of 50S assembly. It makes multiple contacts with different domains of the 23S rRNA in the assembled 50S subunit and ribosome. Its function is as follows. The globular domain of the protein is located near the polypeptide exit tunnel on the outside of the subunit, while an extended beta-hairpin is found that lines the wall of the exit tunnel in the center of the 70S ribosome. The sequence is that of Large ribosomal subunit protein uL22 from Pediococcus pentosaceus (strain ATCC 25745 / CCUG 21536 / LMG 10740 / 183-1w).